Here is a 118-residue protein sequence, read N- to C-terminus: Large ribosomal subunit protein uL18 (118 aa).

It belongs to the universal ribosomal protein uL18 family. As to quaternary structure, part of the 50S ribosomal subunit; part of the 5S rRNA/L5/L18/L25 subcomplex. Contacts the 5S and 23S rRNAs.

Functionally, this is one of the proteins that bind and probably mediate the attachment of the 5S RNA into the large ribosomal subunit, where it forms part of the central protuberance. This Campylobacter jejuni subsp. jejuni serotype O:6 (strain 81116 / NCTC 11828) protein is Large ribosomal subunit protein uL18.